We begin with the raw amino-acid sequence, 199 residues long: RNA pyrophosphohydrolase (199 aa).

In terms of domain architecture, Nudix hydrolase spans 6-154 (GYRPNVGIVL…KREVYELALS (149 aa)). The short motif at 38–59 (GGIQHGESPEQAMYRELHEEVG) is the Nudix box element.

Belongs to the Nudix hydrolase family. RppH subfamily. A divalent metal cation is required as a cofactor.

Its function is as follows. Accelerates the degradation of transcripts by removing pyrophosphate from the 5'-end of triphosphorylated RNA, leading to a more labile monophosphorylated state that can stimulate subsequent ribonuclease cleavage. This Polynucleobacter asymbioticus (strain DSM 18221 / CIP 109841 / QLW-P1DMWA-1) (Polynucleobacter necessarius subsp. asymbioticus) protein is RNA pyrophosphohydrolase.